Consider the following 427-residue polypeptide: Putative F-box/FBD/LRR-repeat protein At4g13965 (427 aa).

Residues 13-61 (ADRISQLPEALIIQILSLLPTEVAVTTSVLSKQWQFLWKMLPKLNFDSL) enclose the F-box domain. LRR repeat units lie at residues 67-93 (FKTF…HLIV), 98-122 (CNSM…VLEV), 141-168 (TLEL…HLHY), 169-194 (VDFK…VVHR), 213-241 (LTIY…KIVG), and 258-284 (SMIV…FLEF). An FBD domain is found at 346 to 396 (KWNKPKIVPECLLFHLETFMWKGYEWKRNDETEVAKYILSNTNRLKRATFF).

The chain is Putative F-box/FBD/LRR-repeat protein At4g13965 from Arabidopsis thaliana (Mouse-ear cress).